Consider the following 459-residue polypeptide: Putrescine aminotransferase (459 aa).

Pyridoxal 5'-phosphate is bound by residues 150–151 (GT) and Q274. An N6-(pyridoxal phosphate)lysine modification is found at K300. T332 is a binding site for pyridoxal 5'-phosphate.

It belongs to the class-III pyridoxal-phosphate-dependent aminotransferase family. Putrescine aminotransferase subfamily. Pyridoxal 5'-phosphate is required as a cofactor.

The catalysed reaction is an alkane-alpha,omega-diamine + 2-oxoglutarate = an omega-aminoaldehyde + L-glutamate. It carries out the reaction putrescine + 2-oxoglutarate = 1-pyrroline + L-glutamate + H2O. It catalyses the reaction cadaverine + 2-oxoglutarate = 5-aminopentanal + L-glutamate. The protein operates within amine and polyamine degradation; putrescine degradation; 4-aminobutanal from putrescine (transaminase route): step 1/1. In terms of biological role, catalyzes the aminotransferase reaction from putrescine to 2-oxoglutarate, leading to glutamate and 4-aminobutanal, which spontaneously cyclizes to form 1-pyrroline. This is the first step in one of two pathways for putrescine degradation, where putrescine is converted into 4-aminobutanoate (gamma-aminobutyrate or GABA) via 4-aminobutanal. Also functions as a cadaverine transaminase in a a L-lysine degradation pathway to succinate that proceeds via cadaverine, glutarate and L-2-hydroxyglutarate. The chain is Putrescine aminotransferase from Escherichia coli O9:H4 (strain HS).